The following is a 167-amino-acid chain: Zymogen granule membrane protein 16 (167 aa).

Positions 1–16 are cleaved as a signal peptide; sequence MLAVALLVLLCASASA. The region spanning 24 to 159 is the Jacalin-type lectin domain; that stretch reads SSYSGEYGGK…IDSISLHWDT (136 aa).

The protein belongs to the jacalin lectin family.

The protein resides in the secreted. It localises to the extracellular space. It is found in the extracellular matrix. Its subcellular location is the zymogen granule lumen. The protein localises to the golgi apparatus lumen. May play a role in protein trafficking. May act as a linker molecule between the submembranous matrix on the luminal side of zymogen granule membrane (ZGM) and aggregated secretory proteins during granule formation in the TGN. In Mus musculus (Mouse), this protein is Zymogen granule membrane protein 16 (Zg16).